The following is a 167-amino-acid chain: Plastocyanin major isoform, chloroplastic (167 aa).

Residues 1-52 constitute a chloroplast transit peptide; sequence MASVTSATVAIPSFTGLKASTIKSSATVRIQTAAVASPKLTVKSSLKNFGVA. The N-terminal 16 residues, 53-68, are a transit peptide targeting the thylakoid; it reads AVAAAASIALAGNAMA. The 99-residue stretch at 69-167 folds into the Plastocyanin-like domain; that stretch reads IEVLLGGGDG…AGMVGKVTVN (99 aa). Positions 105, 152, 155, and 160 each coordinate Cu cation.

This sequence belongs to the plastocyanin family. It depends on Cu(2+) as a cofactor.

The protein localises to the plastid. Its subcellular location is the chloroplast thylakoid membrane. Its function is as follows. Participates in electron transfer between P700 and the cytochrome b6-f complex in photosystem I. Seems to be the major plastocyanin in Arabidopsis. The protein is Plastocyanin major isoform, chloroplastic (DRT112) of Arabidopsis thaliana (Mouse-ear cress).